The sequence spans 392 residues: Tyrosine--tRNA ligase (392 aa).

The 'HIGH' region motif lies at 39–48 (PTAPDIHIGH). Residues 223-227 (KMSKS) carry the 'KMSKS' region motif. Lys-226 is a binding site for ATP. The S4 RNA-binding domain occupies 331-391 (IGIAQLLKQA…GKRRFARVVL (61 aa)).

Belongs to the class-I aminoacyl-tRNA synthetase family. TyrS type 2 subfamily. As to quaternary structure, homodimer.

Its subcellular location is the cytoplasm. It carries out the reaction tRNA(Tyr) + L-tyrosine + ATP = L-tyrosyl-tRNA(Tyr) + AMP + diphosphate + H(+). In terms of biological role, catalyzes the attachment of tyrosine to tRNA(Tyr) in a two-step reaction: tyrosine is first activated by ATP to form Tyr-AMP and then transferred to the acceptor end of tRNA(Tyr). The chain is Tyrosine--tRNA ligase from Ralstonia nicotianae (strain ATCC BAA-1114 / GMI1000) (Ralstonia solanacearum).